The sequence spans 686 residues: Protein SDA1 homolog (686 aa).

3 positions are modified to phosphoserine: Ser-232, Ser-234, and Ser-236. Residues 254 to 315 (KKGSKNKKKL…SCKERFEVKM (62 aa)) are a coiled coil. The disordered stretch occupies residues 484–508 (LEKEENTENDEDGWESASLSEEEED). Positions 490–508 (TENDEDGWESASLSEEEED) are enriched in acidic residues. Thr-551 is subject to Phosphothreonine. The interval 563 to 586 (MKKEMDAAPGKAQKRKYLDMDSDE) is disordered. Ser-584, Ser-588, and Ser-594 each carry phosphoserine. The segment at 604–649 (KPKSDKETRLATAMAGRTDRKEFVRKKTKINPFSSSTNKEKKKQKN) is disordered.

Belongs to the SDA1 family.

Its subcellular location is the nucleus. It localises to the nucleolus. In terms of biological role, required for 60S pre-ribosomal subunits export to the cytoplasm. In Rattus norvegicus (Rat), this protein is Protein SDA1 homolog (Sdad1).